Consider the following 400-residue polypeptide: Nicotinate phosphoribosyltransferase (400 aa).

Residue H220 is modified to Phosphohistidine; by autocatalysis.

It belongs to the NAPRTase family. In terms of processing, transiently phosphorylated on a His residue during the reaction cycle. Phosphorylation strongly increases the affinity for substrates and increases the rate of nicotinate D-ribonucleotide production. Dephosphorylation regenerates the low-affinity form of the enzyme, leading to product release.

It catalyses the reaction nicotinate + 5-phospho-alpha-D-ribose 1-diphosphate + ATP + H2O = nicotinate beta-D-ribonucleotide + ADP + phosphate + diphosphate. Its pathway is cofactor biosynthesis; NAD(+) biosynthesis; nicotinate D-ribonucleotide from nicotinate: step 1/1. In terms of biological role, catalyzes the synthesis of beta-nicotinate D-ribonucleotide from nicotinate and 5-phospho-D-ribose 1-phosphate at the expense of ATP. The polypeptide is Nicotinate phosphoribosyltransferase (Salmonella newport (strain SL254)).